The sequence spans 102 residues: Acid shock protein (102 aa).

A signal peptide spans 1 to 21 (MKKVLALVVAAAMGLSSAAFA). Residues 22–58 (AETAITPAPTATTTKAAPAKTTHHKKQHKAAPAQKAQ) constitute a propeptide that is removed on maturation. A compositionally biased stretch (low complexity) spans 26 to 41 (ITPAPTATTTKAAPAK). Positions 26 to 102 (ITPAPTATTT…PAKPAAQPAA (77 aa)) are disordered. Over residues 80–90 (AAKKHAKKHSH) the composition is skewed to basic residues. The span at 91-102 (QQPAKPAAQPAA) shows a compositional bias: low complexity.

Belongs to the Asr family. Proteolytic processing gives rise to the active protein.

Its subcellular location is the periplasm. Its function is as follows. Required for growth and/or survival at acidic conditions. This chain is Acid shock protein, found in Escherichia coli O81 (strain ED1a).